Here is a 278-residue protein sequence, read N- to C-terminus: NAD-capped RNA hydrolase NudC (278 aa).

R84 contributes to the substrate binding site. Zn(2+) contacts are provided by C114 and C117. E127 is a binding site for substrate. Residue C132 participates in Zn(2+) binding. Y140 contacts substrate. The region spanning 141–264 is the Nudix hydrolase domain; that stretch reads PRISPSMIVL…SIARYLIEAY (124 aa). The a divalent metal cation site is built by A174, E190, and E194. The Nudix box signature appears at 175–196; it reads GFVEPGESAEDCVHREVMEEVQ. Residue 208–215 coordinates substrate; that stretch reads QCWPFPHS. E235 lines the a divalent metal cation pocket. Substrate is bound at residue A257.

Belongs to the Nudix hydrolase family. NudC subfamily. As to quaternary structure, homodimer. Mg(2+) serves as cofactor. The cofactor is Mn(2+). Requires Zn(2+) as cofactor.

It catalyses the reaction a 5'-end NAD(+)-phospho-ribonucleoside in mRNA + H2O = a 5'-end phospho-adenosine-phospho-ribonucleoside in mRNA + beta-nicotinamide D-ribonucleotide + 2 H(+). The enzyme catalyses NAD(+) + H2O = beta-nicotinamide D-ribonucleotide + AMP + 2 H(+). It carries out the reaction NADH + H2O = reduced beta-nicotinamide D-ribonucleotide + AMP + 2 H(+). MRNA decapping enzyme that specifically removes the nicotinamide adenine dinucleotide (NAD) cap from a subset of mRNAs by hydrolyzing the diphosphate linkage to produce nicotinamide mononucleotide (NMN) and 5' monophosphate mRNA. The NAD-cap is present at the 5'-end of some mRNAs and stabilizes RNA against 5'-processing. Has preference for mRNAs with a 5'-end purine. Catalyzes the hydrolysis of a broad range of dinucleotide pyrophosphates. This is NAD-capped RNA hydrolase NudC from Pseudomonas syringae pv. tomato (strain ATCC BAA-871 / DC3000).